Reading from the N-terminus, the 247-residue chain is VQ motif-containing protein 4 (247 aa).

The tract at residues 1–128 (MENSPRYREA…SSSSASGFRL (128 aa)) is disordered. Phosphoserine is present on S16. Low complexity predominate over residues 21–37 (NSNNSCGMSSSSESNKP). Polar residues-rich tracts occupy residues 48–75 (RSES…QMLT) and 87–106 (LKPN…SSFS). The short motif at 67–76 (FKQVVQMLTG) is the VQ element. Phosphoserine occurs at positions 106, 155, 163, 165, and 175. Phosphothreonine is present on T178. Positions 184 to 247 (PFDRSGSSNQ…VSGSSSASTS (64 aa)) are disordered. Phosphoserine is present on S194. Residues 200–210 (AEEKAMKERGF) show a composition bias toward basic and acidic residues. S215 carries the post-translational modification Phosphoserine. Phosphothreonine is present on residues T219 and T234. Phosphoserine occurs at positions 235, 239, and 243. The segment covering 236 to 247 (PRVSGSSSASTS) has biased composition (polar residues).

As to quaternary structure, interacts with MPK3 and MPK6. In terms of processing, phosphorylated on serine and threonine residues by MPK6 following treatment with the pathogen-associated molecular pattern (PAMP) flg22. MAP kinase-mediated phosphorylation after PAMP elicitation causes degradation of VQ4, allowing WRKY33 to promote transcription from defense genes.

Its subcellular location is the nucleus. Acts as a negative regulator of WRKY33 transcription factor activity in the promotion of defense gene expression. Acts as a negative regulator of pathogen-associated molecular pattern (PAMP)-induced responses to modulate resistance to pathogens. The chain is VQ motif-containing protein 4 from Arabidopsis thaliana (Mouse-ear cress).